The sequence spans 358 residues: Arginase (358 aa).

4 residues coordinate Mn(2+): His-146, Asp-174, His-176, and Asp-178. Substrate contacts are provided by residues 176-180 (HADIN), 187-189 (SGN), and Asp-233. Mn(2+) is bound by residues Asp-280 and Asp-282. Residues Thr-294 and Glu-325 each coordinate substrate.

The protein belongs to the arginase family. In terms of assembly, homohexamer. Requires Mn(2+) as cofactor.

It is found in the cytoplasm. It catalyses the reaction L-arginine + H2O = urea + L-ornithine. Its pathway is nitrogen metabolism; urea cycle; L-ornithine and urea from L-arginine: step 1/1. This Neurospora crassa (strain ATCC 24698 / 74-OR23-1A / CBS 708.71 / DSM 1257 / FGSC 987) protein is Arginase (aga-1).